The sequence spans 57 residues: Large ribosomal subunit protein eL37 (57 aa).

Residues Cys20, Cys23, Cys35, and Cys38 each coordinate Zn(2+). The C4-type zinc-finger motif lies at 20–38 (CRRCGEKSYHKQKKVCASC).

The protein belongs to the eukaryotic ribosomal protein eL37 family. Zn(2+) is required as a cofactor.

Functionally, binds to the 23S rRNA. The chain is Large ribosomal subunit protein eL37 from Natronomonas pharaonis (strain ATCC 35678 / DSM 2160 / CIP 103997 / JCM 8858 / NBRC 14720 / NCIMB 2260 / Gabara) (Halobacterium pharaonis).